Reading from the N-terminus, the 305-residue chain is Putative glutamine--fructose-6-phosphate aminotransferase [isomerizing] (305 aa).

The Nucleophile; for GATase activity role is filled by cysteine 2. In terms of domain architecture, Glutamine amidotransferase type-2 spans 2–305 (CGIFGYCNFL…RLCITSAVCE (304 aa)).

The catalysed reaction is D-fructose 6-phosphate + L-glutamine = D-glucosamine 6-phosphate + L-glutamate. It participates in nucleotide-sugar biosynthesis; UDP-N-acetyl-alpha-D-glucosamine biosynthesis; alpha-D-glucosamine 6-phosphate from D-fructose 6-phosphate: step 1/1. Functionally, involved in amino sugar synthesis (formation of chitin, supplies the amino sugars of asparagine-linked oligosaccharides of glycoproteins). This chain is Putative glutamine--fructose-6-phosphate aminotransferase [isomerizing], found in Saccharomyces cerevisiae (strain Lalvin EC1118 / Prise de mousse) (Baker's yeast).